Reading from the N-terminus, the 498-residue chain is Zinc finger protein 682 (498 aa).

Residues 4–75 (LTFRDVTIEF…KRHETIAKPP (72 aa)) form the KRAB domain. 10 C2H2-type zinc fingers span residues 173–195 (FKCM…KIIH), 201–223 (CICE…KRIH), 229–251 (YKCE…KRIH), 257–279 (YKCE…KKIH), 285–307 (YTCE…KTIH), 313–335 (YKCK…ERTH), 341–363 (YKCE…KVIH), 369–391 (YKCE…KRIH), 397–419 (YKCE…KRIH), and 425–447 (YNCE…KKIH). A C2H2-type 11; degenerate zinc finger spans residues 453 to 475 (YKCEECGKAFKRCSHLNEHKRVQ).

The protein belongs to the krueppel C2H2-type zinc-finger protein family.

The protein localises to the nucleus. In terms of biological role, may be involved in transcriptional regulation. The polypeptide is Zinc finger protein 682 (ZNF682) (Homo sapiens (Human)).